Consider the following 179-residue polypeptide: MSLKDRFDRFIDYFTEDEDSSLPYEKRDEPVFTSVNSSQEPALPMNQPSQSAGAKENNITRLHARQQELANQSQRATDKVIIDVRYPRKYEDATEIVDLLAGNESILIDFQYMTEVQARRCLDYLDGACHVLAGNLKKVASTMYLLTPVNVIVNVEDIRLPDEDQQGEFGFDMKRNRVR.

Positions 19–55 (DSSLPYEKRDEPVFTSVNSSQEPALPMNQPSQSAGAK) are disordered. Residues 33-55 (TSVNSSQEPALPMNQPSQSAGAK) are compositionally biased toward polar residues.

Belongs to the SepF family. Homodimer. Interacts with FtsZ.

It is found in the cytoplasm. Functionally, cell division protein that is part of the divisome complex and is recruited early to the Z-ring. Probably stimulates Z-ring formation, perhaps through the cross-linking of FtsZ protofilaments. Its function overlaps with FtsA. This is Cell division protein SepF from Streptococcus pneumoniae (strain JJA).